We begin with the raw amino-acid sequence, 321 residues long: uncharacterized protein (321 aa).

Positions 280–306 (NSDHINNENNTNSNNDDNSNNSNNNNE) are disordered. A compositionally biased stretch (low complexity) spans 286–306 (NENNTNSNNDDNSNNSNNNNE).

This is an uncharacterized protein from Dictyostelium discoideum (Social amoeba).